We begin with the raw amino-acid sequence, 196 residues long: Cilia- and flagella-associated protein 107 (196 aa).

Mn regions lie at residues 46-61 and 96-108; these read TPQT…FPGH and ISTY…RHNY. The interval 168–196 is disordered; sequence YPRPPAGAMSRREHAIPVPPPRLQPVPHF. The span at 184–196 shows a compositional bias: pro residues; the sequence is PVPPPRLQPVPHF.

As to quaternary structure, microtubule inner protein component of sperm flagellar doublet microtubules. In terms of tissue distribution, expressed in trachea multiciliated cells.

The protein localises to the cytoplasm. The protein resides in the cytoskeleton. Its subcellular location is the cilium axoneme. It is found in the flagellum axoneme. In terms of biological role, microtubule inner protein (MIP) part of the dynein-decorated doublet microtubules (DMTs) in cilia axoneme, which is required for motile cilia beating. The chain is Cilia- and flagella-associated protein 107 from Bos taurus (Bovine).